Reading from the N-terminus, the 463-residue chain is ATP-dependent rRNA helicase SPB4 (463 aa).

The short motif at 4 to 32 is the Q motif element; that stretch reads KGIEDVAMNGRLKKEIEENGFGKMTEVQL. A Helicase ATP-binding domain is found at 35–205; that stretch reads IPEVLKGKDV…RVFLRNPVSI (171 aa). Position 48 to 55 (48 to 55) interacts with ATP; the sequence is SPTGTGKT. Positions 153 to 156 match the DEAD box motif; it reads DEAD. In terms of domain architecture, Helicase C-terminal spans 226–382; that stretch reads KLLVLMDIVT…DIKSMISPEL (157 aa). A disordered region spans residues 444–463; it reads RDGKKRALPKKKYRKKRAIK. The span at 446 to 463 shows a compositional bias: basic residues; sequence GKKRALPKKKYRKKRAIK.

This sequence belongs to the DEAD box helicase family. DDX55/SPB4 subfamily. In terms of assembly, component of pre-60S ribosomal complexes.

The protein localises to the nucleus. It is found in the nucleolus. The enzyme catalyses ATP + H2O = ADP + phosphate + H(+). ATP-binding RNA helicase involved in the biogenesis of 60S ribosomal subunits. Binds 90S pre-ribosomal particles and dissociates from pre-60S ribosomal particles after processing of 27SB pre-rRNA. Required for the normal formation of 18S rRNA through the processing of pre-rRNAs at sites A0, A1 and A2, and the normal formation of 25S and 5.8S rRNAs through the processing of pre-rRNAs at sites C1 and C2. The sequence is that of ATP-dependent rRNA helicase SPB4 from Encephalitozoon cuniculi (strain GB-M1) (Microsporidian parasite).